Reading from the N-terminus, the 679-residue chain is Protein hook (679 aa).

The 118-residue stretch at 6-123 folds into the Calponin-homology (CH) domain; that stretch reads NEMYYSLLEW…RLLQLVLGCA (118 aa). 2 coiled-coil regions span residues 135-437 and 480-574; these read EIMC…LKCG and QTAL…QEIL.

It belongs to the hook family. Homodimer. Interacts with microtubules via its N-terminus.

It is found in the cytoplasm. The protein localises to the cytoskeleton. It localises to the endosome. The protein resides in the synapse. Its function is as follows. Involved in endocytic trafficking by stabilizing organelles of the endocytic pathway. Probably acts as a cytoskeletal linker protein required to tether endosome vesicles to the cytoskeleton. Involved in modulation of endocytosis at stages required for down-regulation of membrane proteins that control synapse size. Not involved in synaptic vesicle recycling. Required in R7 cells for boss endocytosis into multivesicular bodies (MVBs). Has a role in regulating adult longevity. This is Protein hook from Drosophila yakuba (Fruit fly).